The primary structure comprises 65 residues: Crotamine (65 aa).

Residues 1–22 (MKILYLLFAFLFLAFLSEPGNA) form the signal peptide. Short sequence motifs (nuclear localization signal) lie at residues 24–40 (KQCH…EKIC) and 49–61 (KMDC…CCKK). Intrachain disulfides connect cysteine 26/cysteine 58, cysteine 33/cysteine 52, and cysteine 40/cysteine 59.

Belongs to the crotamine-myotoxin family. As to quaternary structure, monomer. As to expression, expressed by the venom gland.

Its subcellular location is the secreted. Cationic peptide that possesses multiple functions. It acts as a cell-penetrating peptide (CPP), and as a potent voltage-gated potassium channel inhibitor. It exhibits antimicrobial activities, hind limb paralysis, and severe muscle necrosis by a non-enzymatic mechanism. As a cell-penetrating peptide, crotamine has high specificity for actively proliferating cells, and interacts inside the cell with subcellular and subnuclear structures, like vesicular compartments, chromosomes and centrioles. It penetrates into the cells as fast as five minutes after its addition to cell culture medium. In vivo, after intraperitoneal administration, it is found in cells of peritoneal fluid and bone marrow, demonstrating preferential nuclear and perinuclear localization. To enter the cell, it interacts with the chains of heparan sulfate membrane proteoglycan (HSPG), and is endocytosed (in complex with HSPG) in vesicles which are transported into the cell with the help of clathrin. Inside the cell, crotamine accumulates in lysosomal vesicles. As soon as the peptide accumulates in endosomes/lysosomes vesicles, these compartments are disrupted and their contents released into the cytosol. This loss of lysosomal content induces cell death at high concentrations, or promotes the distribution of crotamine in cytoplasmic compartments, which is a step before crotamine nuclear uptake. As a potassium channel inhibitor, this toxin selectively inhibits Kv1.1/KCNA1, Kv1.2/KCNA2 and Kv1.3/KCNA3 channels with an IC(50) of 369, 386 and 287 nM, respectively. The inhibition of Kv1.3/KCNA channels induced by this toxin occurs rapidly and is voltage-independent. The channel inhibition is reversible after washing, suggesting a pure and classical channel blockage effect, without effects in potassium channel kinetics. As an antimicrobial peptide, crotamine shows antibacterial activity against E.coli and B.subtilis, and antifungal activity against Candida spp., Trichosporon spp. and C.neoformans. It kills bacteria through membrane permeabilization. The polypeptide is Crotamine (CRO2) (Crotalus durissus terrificus (South American rattlesnake)).